The following is a 367-amino-acid chain: Chorismate synthase (367 aa).

Arg48 contacts NADP(+). Residues 125–127 (RSS), 238–239 (NA), Gly278, 293–297 (KPTSS), and Arg319 contribute to the FMN site.

This sequence belongs to the chorismate synthase family. Homotetramer. FMNH2 serves as cofactor.

The catalysed reaction is 5-O-(1-carboxyvinyl)-3-phosphoshikimate = chorismate + phosphate. The protein operates within metabolic intermediate biosynthesis; chorismate biosynthesis; chorismate from D-erythrose 4-phosphate and phosphoenolpyruvate: step 7/7. Its function is as follows. Catalyzes the anti-1,4-elimination of the C-3 phosphate and the C-6 proR hydrogen from 5-enolpyruvylshikimate-3-phosphate (EPSP) to yield chorismate, which is the branch point compound that serves as the starting substrate for the three terminal pathways of aromatic amino acid biosynthesis. This reaction introduces a second double bond into the aromatic ring system. The protein is Chorismate synthase of Halorhodospira halophila (strain DSM 244 / SL1) (Ectothiorhodospira halophila (strain DSM 244 / SL1)).